Reading from the N-terminus, the 99-residue chain is Large ribosomal subunit protein bL21 (99 aa).

Belongs to the bacterial ribosomal protein bL21 family. In terms of assembly, part of the 50S ribosomal subunit. Contacts protein L20.

In terms of biological role, this protein binds to 23S rRNA in the presence of protein L20. This chain is Large ribosomal subunit protein bL21, found in Anaplasma phagocytophilum (strain HZ).